The primary structure comprises 564 residues: Isopullulanase (564 aa).

The N-terminal stretch at 1–19 (MRSTGYLLTLSAAFQVAQA) is a signal peptide. 15 N-linked (GlcNAc...) asparagine glycosylation sites follow: N24, N94, N115, N138, N186, N210, N305, N381, N448, N455, N460, N486, N491, N503, and N535.

N-glycosylated.

It is found in the secreted. It catalyses the reaction Hydrolysis of pullulan to isopanose (6-alpha-maltosylglucose).. Hydrolyzes pullulan, a linear polymer which is composed of maltotriose units with alpha-1,6 glucosidic linkages, to produce isopanose (Glca1-4Glca1-6Glc). The sequence is that of Isopullulanase (ipuA) from Aspergillus niger.